Here is a 356-residue protein sequence, read N- to C-terminus: Dual-specificity RNA methyltransferase RlmN (356 aa).

E95 serves as the catalytic Proton acceptor. The region spanning 101–332 (EDERGTLCIS…VTVIRDRRGE (232 aa)) is the Radical SAM core domain. C108 and C338 form a disulfide bridge. [4Fe-4S] cluster-binding residues include C115, C119, and C122. Residues 165–166 (GE), S197, 219–221 (SLH), and N295 contribute to the S-adenosyl-L-methionine site. The active-site S-methylcysteine intermediate is the C338.

It belongs to the radical SAM superfamily. RlmN family. Requires [4Fe-4S] cluster as cofactor.

The protein localises to the cytoplasm. The enzyme catalyses adenosine(2503) in 23S rRNA + 2 reduced [2Fe-2S]-[ferredoxin] + 2 S-adenosyl-L-methionine = 2-methyladenosine(2503) in 23S rRNA + 5'-deoxyadenosine + L-methionine + 2 oxidized [2Fe-2S]-[ferredoxin] + S-adenosyl-L-homocysteine. It catalyses the reaction adenosine(37) in tRNA + 2 reduced [2Fe-2S]-[ferredoxin] + 2 S-adenosyl-L-methionine = 2-methyladenosine(37) in tRNA + 5'-deoxyadenosine + L-methionine + 2 oxidized [2Fe-2S]-[ferredoxin] + S-adenosyl-L-homocysteine. Functionally, specifically methylates position 2 of adenine 2503 in 23S rRNA and position 2 of adenine 37 in tRNAs. m2A2503 modification seems to play a crucial role in the proofreading step occurring at the peptidyl transferase center and thus would serve to optimize ribosomal fidelity. In Magnetococcus marinus (strain ATCC BAA-1437 / JCM 17883 / MC-1), this protein is Dual-specificity RNA methyltransferase RlmN.